Here is a 308-residue protein sequence, read N- to C-terminus: Aspartate carbamoyltransferase catalytic subunit (308 aa).

Positions 59 and 60 each coordinate carbamoyl phosphate. Residue lysine 87 coordinates L-aspartate. 3 residues coordinate carbamoyl phosphate: arginine 109, histidine 139, and glutamine 142. Residues arginine 172 and arginine 224 each coordinate L-aspartate. Alanine 265 and proline 266 together coordinate carbamoyl phosphate.

It belongs to the aspartate/ornithine carbamoyltransferase superfamily. ATCase family. As to quaternary structure, heterododecamer (2C3:3R2) of six catalytic PyrB chains organized as two trimers (C3), and six regulatory PyrI chains organized as three dimers (R2).

The catalysed reaction is carbamoyl phosphate + L-aspartate = N-carbamoyl-L-aspartate + phosphate + H(+). It functions in the pathway pyrimidine metabolism; UMP biosynthesis via de novo pathway; (S)-dihydroorotate from bicarbonate: step 2/3. In terms of biological role, catalyzes the condensation of carbamoyl phosphate and aspartate to form carbamoyl aspartate and inorganic phosphate, the committed step in the de novo pyrimidine nucleotide biosynthesis pathway. This Streptococcus mutans serotype c (strain ATCC 700610 / UA159) protein is Aspartate carbamoyltransferase catalytic subunit.